A 136-amino-acid polypeptide reads, in one-letter code: NADPH-dependent 7-cyano-7-deazaguanine reductase (136 aa).

The active-site Thioimide intermediate is cysteine 50. The Proton donor role is filled by aspartate 57. Substrate is bound by residues 72–74 (YEL) and 91–92 (HE).

Belongs to the GTP cyclohydrolase I family. QueF type 1 subfamily.

It localises to the cytoplasm. It carries out the reaction 7-aminomethyl-7-carbaguanine + 2 NADP(+) = 7-cyano-7-deazaguanine + 2 NADPH + 3 H(+). The protein operates within tRNA modification; tRNA-queuosine biosynthesis. Its function is as follows. Catalyzes the NADPH-dependent reduction of 7-cyano-7-deazaguanine (preQ0) to 7-aminomethyl-7-deazaguanine (preQ1). This chain is NADPH-dependent 7-cyano-7-deazaguanine reductase, found in Prochlorococcus marinus (strain AS9601).